Here is a 285-residue protein sequence, read N- to C-terminus: RNA polymerase sigma factor RpoH (285 aa).

The segment at 53–122 is sigma-70 factor domain-2; the sequence is LILSHLRFVI…IHEYVLRNWR (70 aa). Positions 77-80 match the Interaction with polymerase core subunit RpoC motif; that stretch reads DLIQ. Residues 229 to 281 are sigma-70 factor domain-4; that stretch reads ALLRLDERSRNIIRARWLDKKEKNTLQKIANNYGISAERVRQLEKNAMKKLKI. Positions 254–273 form a DNA-binding region, H-T-H motif; it reads LQKIANNYGISAERVRQLEK.

It belongs to the sigma-70 factor family. RpoH subfamily. In terms of assembly, interacts with the RNA polymerase core enzyme.

The protein resides in the cytoplasm. Functionally, sigma factors are initiation factors that promote the attachment of RNA polymerase to specific initiation sites and are then released. This sigma factor is involved in regulation of expression of heat shock genes. The chain is RNA polymerase sigma factor RpoH from Buchnera aphidicola subsp. Schizaphis graminum (strain Sg).